Here is a 125-residue protein sequence, read N- to C-terminus: Histone H2B (125 aa).

The interval 1–32 (MAPKVRAAKKGEKRVGKAKSGTAETAKRRRGK) is disordered. An O-linked (GlcNAc) serine glycan is attached at Ser-112. Lys-120 is covalently cross-linked (Glycyl lysine isopeptide (Lys-Gly) (interchain with G-Cter in ubiquitin)).

Belongs to the histone H2B family. In terms of assembly, the nucleosome is a histone octamer containing two molecules each of H2A, H2B, H3 and H4 assembled in one H3-H4 heterotetramer and two H2A-H2B heterodimers. The octamer wraps approximately 147 bp of DNA. Post-translationally, monoubiquitination of Lys-120 gives a specific tag for epigenetic transcriptional activation and is also prerequisite for histone H3 'Lys-4' and 'Lys-79' methylation. In terms of processing, glcNAcylation at Ser-112 promotes monoubiquitination of Lys-120. It fluctuates in response to extracellular glucose, and associates with transcribed genes.

The protein localises to the nucleus. The protein resides in the chromosome. Its function is as follows. Core component of nucleosome. Nucleosomes wrap and compact DNA into chromatin, limiting DNA accessibility to the cellular machineries which require DNA as a template. Histones thereby play a central role in transcription regulation, DNA repair, DNA replication and chromosomal stability. DNA accessibility is regulated via a complex set of post-translational modifications of histones, also called histone code, and nucleosome remodeling. The chain is Histone H2B from Acropora formosa (Staghorn coral).